The primary structure comprises 208 residues: Peptidyl-prolyl cis-trans isomerase FKBP13, chloroplastic (208 aa).

Disulfide bonds link Cys-84–Cys-96 and Cys-185–Cys-190. Positions 109–208 (GQLIKAHYVG…LFDIEYIGKA (100 aa)) constitute a PPIase FKBP-type domain.

The protein belongs to the FKBP-type PPIase family. In terms of assembly, interacts in vitro with LTO1. The precursor, but not the mature form of the protein, interacts with the Rieske protein. As to expression, expressed in stems, leaves and developing flower buds, but not in roots.

It is found in the plastid. It localises to the chloroplast thylakoid lumen. The enzyme catalyses [protein]-peptidylproline (omega=180) = [protein]-peptidylproline (omega=0). Its activity is regulated as follows. PPIase activity is optimal in oxidized form (S-S) and minimal in reduced form (SH). Reduction of the oxidized form is mediated by thioredoxin (TRX-M). In terms of biological role, PPIases accelerate the folding of proteins. It catalyzes the cis-trans isomerization of proline imidic peptide bonds in oligopeptides. Responsive of the major PPIase activity in the chloroplast thylakoid lumen. Regulates the accumulation of Rieske protein, an essential component of the photosynthetic electron transport chain. The protein is Peptidyl-prolyl cis-trans isomerase FKBP13, chloroplastic of Arabidopsis thaliana (Mouse-ear cress).